Consider the following 408-residue polypeptide: MSWDQVWIDVNVATMDPSISAPYGAITNAAIAVKDGKIAWLGPRSELPAFDVLSIPVYRGKGGWITPGLIDAHTHLVFAGNRANEFELRLKGATYEEIARAGGGIISTVNACREADEAELFDLGRQRLNALAKEGVTTVEIKSGYGLDTETELKILRVARELGQHHHVDVKTTFLGAHAVPPEFKDNSDGYVDLIINKMLPAVIAENLADAVDVFCENIAFNLEQTERVLSAAKAAGLQVKLHAEQLSNMGGSELAARLGAKSVDHIEYLDEAGVKALSESGTCAVLLPGAFYFLRETQKPPIDLLRQYGVPMVLASDFNPGSSPICSTLLMLNMGCTLFRLTPEEALAGLTLNAAKALGIEESVGSLVVGKQADFCLWDIATPAQLAYSYGVNPCKDVVKNGKLVHQ.

Residues His-73 and His-75 each contribute to the Fe(3+) site. The Zn(2+) site is built by His-73 and His-75. Residues Arg-82, Tyr-145, and His-178 each contribute to the 4-imidazolone-5-propanoate site. Tyr-145 is an N-formimidoyl-L-glutamate binding site. A Fe(3+)-binding site is contributed by His-243. His-243 provides a ligand contact to Zn(2+). Gln-246 is a binding site for 4-imidazolone-5-propanoate. Fe(3+) is bound at residue Asp-318. Residue Asp-318 coordinates Zn(2+). Residues Asn-320 and Gly-322 each coordinate N-formimidoyl-L-glutamate. Ser-323 lines the 4-imidazolone-5-propanoate pocket.

This sequence belongs to the metallo-dependent hydrolases superfamily. HutI family. Zn(2+) is required as a cofactor. It depends on Fe(3+) as a cofactor.

Its subcellular location is the cytoplasm. It carries out the reaction 4-imidazolone-5-propanoate + H2O = N-formimidoyl-L-glutamate. The protein operates within amino-acid degradation; L-histidine degradation into L-glutamate; N-formimidoyl-L-glutamate from L-histidine: step 3/3. Functionally, catalyzes the hydrolytic cleavage of the carbon-nitrogen bond in imidazolone-5-propanoate to yield N-formimidoyl-L-glutamate. It is the third step in the universal histidine degradation pathway. This Shewanella sp. (strain ANA-3) protein is Imidazolonepropionase.